The chain runs to 617 residues: Chaperone protein HscA homolog (617 aa).

The protein belongs to the heat shock protein 70 family.

In terms of biological role, chaperone involved in the maturation of iron-sulfur cluster-containing proteins. Has a low intrinsic ATPase activity which is markedly stimulated by HscB. The polypeptide is Chaperone protein HscA homolog (Photobacterium profundum (strain SS9)).